Here is a 473-residue protein sequence, read N- to C-terminus: Argininosuccinate lyase (473 aa).

A2 carries the N-acetylalanine modification. K7 is subject to N6-acetyllysine. S27 contacts 2-(N(omega)-L-arginino)succinate. K69 carries the N6-acetyllysine modification. 2-(N(omega)-L-arginino)succinate is bound by residues N114 and T159. The active-site Proton acceptor is H160. The active-site Proton donor is S281. K288 carries the post-translational modification N6-acetyllysine. 2-(N(omega)-L-arginino)succinate contacts are provided by N289, Y321, Q326, and K329.

Belongs to the lyase 1 family. Argininosuccinate lyase subfamily. Homotetramer. Forms tissue-specific complexes with ASS1, SLC7A1, HSP90AA1 and nitric oxide synthase NOS1, NOS2 or NOS3; the complex maintenance is independent of ASL catalytic function. Post-translationally, acetylation modifies enzyme activity in response to alterations of extracellular nutrient availability. Acetylation increased with trichostin A (TSA) or with nicotinamide (NAM). Glucose increases acetylation by about a factor of 3 with decreasing enzyme activity. Acetylation on Lys-288 is decreased on the addition of extra amino acids resulting in activation of enzyme activity.

It carries out the reaction 2-(N(omega)-L-arginino)succinate = fumarate + L-arginine. The protein operates within amino-acid biosynthesis; L-arginine biosynthesis; L-arginine from L-ornithine and carbamoyl phosphate: step 3/3. It participates in nitrogen metabolism; urea cycle; L-arginine and fumarate from (N(omega)-L-arginino)succinate: step 1/1. With respect to regulation, enzyme activity is regulated by acetylation. Catalyzes the reversible cleavage of L-argininosuccinate to fumarate and L-arginine, an intermediate step reaction in the urea cycle mostly providing for hepatic nitrogen detoxification into excretable urea as well as de novo L-arginine synthesis in nonhepatic tissues. Essential regulator of intracellular and extracellular L-arginine pools. As part of citrulline-nitric oxide cycle, forms tissue-specific multiprotein complexes with argininosuccinate synthase ASS1, transport protein SLC7A1 and nitric oxide synthase NOS1, NOS2 or NOS3, allowing for cell-autonomous L-arginine synthesis while channeling extracellular L-arginine to nitric oxide synthesis pathway. In Bos taurus (Bovine), this protein is Argininosuccinate lyase (ASL).